The primary structure comprises 1032 residues: Vacuolar membrane protease (1032 aa).

The Cytoplasmic portion of the chain corresponds to 1 to 11 (MRFQNPFAFRP). A helical membrane pass occupies residues 12-32 (GPVSFWTTVIYLALVIPLIYV). Topologically, residues 33–426 (HETVPPAPSD…AWAVFALRGL (394 aa)) are vacuolar. 2 N-linked (GlcNAc...) asparagine glycosylation sites follow: asparagine 50 and asparagine 142. Residues histidine 207 and aspartate 219 each coordinate Zn(2+). The active-site Proton acceptor is the glutamate 253. Zn(2+)-binding residues include glutamate 254, glutamate 279, and histidine 352. Residues 427 to 447 (FAWSLTLLVATPLILVAITYI) form a helical membrane-spanning segment. Residues 448 to 482 (LARKDKYYFFSRDIKMHHDINDDPVVLGGWKGFLR) are Cytoplasmic-facing. The helical transmembrane segment at 483–503 (FPFALVFAGALTIASTLLLAK) threads the bilayer. Over 504–511 (FNPLIIYS) the chain is Vacuolar. Residues 512–532 (SPYAVWSMTLSIFYFSFWLIM) form a helical membrane-spanning segment. Topologically, residues 533–545 (RGASFIRPSALHR) are cytoplasmic. Residues 546-566 (GYVLIWLFALGWGLQVVGAVA) form a helical membrane-spanning segment. Residues 567-573 (EDRLHIA) are Vacuolar-facing. A helical transmembrane segment spans residues 574 to 594 (ALYATVFLQSAVFLALFISLL). Over 595–708 (EQFALLGKHD…WSGRLPSWTW (114 aa)) the chain is Cytoplasmic. The span at 616–631 (RDISSHGTDHESRPQP) shows a compositional bias: basic and acidic residues. The interval 616-666 (RDISSHGTDHESRPQPEEEPAQPEGDEDESEDATETTPLRANEPGYGSSTR) is disordered. Acidic residues predominate over residues 632–649 (EEEPAQPEGDEDESEDAT). A helical transmembrane segment spans residues 709-729 (IIQFLLLAPVPVILFGNLGLV). Residues 730–745 (AMSALQMTGTDGGSLL) are Vacuolar-facing. Residues 746–766 (VPVLTLGIVSIFLLLPLTPFI) form a helical membrane-spanning segment. At 767–773 (HRVSHHV) the chain is on the cytoplasmic side. A helical membrane pass occupies residues 774–794 (PMFLLCVFAGTFIYNLVAFPF). At 795–1032 (SDSHRFKFYF…LVEVRKTYKV (238 aa)) the chain is on the vacuolar side. Asparagine 812 and asparagine 884 each carry an N-linked (GlcNAc...) asparagine glycan.

It belongs to the peptidase M28 family. Requires Zn(2+) as cofactor.

The protein localises to the vacuole membrane. May be involved in vacuolar sorting and osmoregulation. The protein is Vacuolar membrane protease of Fusarium vanettenii (strain ATCC MYA-4622 / CBS 123669 / FGSC 9596 / NRRL 45880 / 77-13-4) (Fusarium solani subsp. pisi).